We begin with the raw amino-acid sequence, 249 residues long: ATP synthase subunit a (249 aa).

6 helical membrane passes run 29 to 49 (ASLF…FATS), 84 to 104 (FFPF…LGMF), 114 to 134 (IIVT…YGFY), 140 to 160 (FFGI…VASI), 193 to 213 (FVAS…LPLI), and 216 to 236 (VAMT…FAVL).

The protein belongs to the ATPase A chain family. F-type ATPases have 2 components, CF(1) - the catalytic core - and CF(0) - the membrane proton channel. CF(1) has five subunits: alpha(3), beta(3), gamma(1), delta(1), epsilon(1). CF(0) has three main subunits: a(1), b(2) and c(9-12). The alpha and beta chains form an alternating ring which encloses part of the gamma chain. CF(1) is attached to CF(0) by a central stalk formed by the gamma and epsilon chains, while a peripheral stalk is formed by the delta and b chains.

The protein resides in the cell inner membrane. In terms of biological role, key component of the proton channel; it plays a direct role in the translocation of protons across the membrane. The sequence is that of ATP synthase subunit a from Agrobacterium fabrum (strain C58 / ATCC 33970) (Agrobacterium tumefaciens (strain C58)).